The following is a 461-amino-acid chain: Argininosuccinate lyase (461 aa).

This sequence belongs to the lyase 1 family. Argininosuccinate lyase subfamily.

It localises to the cytoplasm. It carries out the reaction 2-(N(omega)-L-arginino)succinate = fumarate + L-arginine. Its pathway is amino-acid biosynthesis; L-arginine biosynthesis; L-arginine from L-ornithine and carbamoyl phosphate: step 3/3. This is Argininosuccinate lyase from Dehalococcoides mccartyi (strain ATCC BAA-2266 / KCTC 15142 / 195) (Dehalococcoides ethenogenes (strain 195)).